A 270-amino-acid polypeptide reads, in one-letter code: uncharacterized protein (270 aa).

One can recognise an HTH lysR-type domain in the interval 1 to 50 (LTEVVKAQSFTKAAENLYTSQPSISRDIKRLENDYDVKVFEFKHSKMTLT). The H-T-H motif DNA-binding region spans 10-29 (FTKAAENLYTSQPSISRDIK).

Belongs to the LysR transcriptional regulatory family.

This is an uncharacterized protein from Staphylococcus xylosus.